Here is a 369-residue protein sequence, read N- to C-terminus: MELSYYEILEVEKHSNQETIKKSYRKLALKYHPDRNAGDKEAEEKFKLINEAYGVLGDEKKRALYDRYGKKGLNQAGTSQSDFSDFFEDLGSFFEDAFGFGARGSKRQKSSIAPDYLQMIELSFKEAVFGCKKTIKAQYQSVCESCDGTGAKDKALENCKQCNGQGQVFMRQGFMSFAQTCGACQGKGKIIKTPCQACKGKTYILKDEEIDAIIPEGIDDQNRMVLKNKGNEYEKGKRGDLYLEARVKEDEHFKREGCDLFIKAPVFFTTIALGHTIKVPSLRGDELELKIPRNAKDRQAFAFRNEGVKHPESSYRGSLIVELQVIYPKSLNKEQQGLLEKLHASFGYEGEPHKSVLETCVSKIKDWFK.

One can recognise a J domain in the interval S4–G69. The segment at G130–D207 adopts a CR-type zinc-finger fold. Zn(2+) is bound by residues C143, C146, C159, C162, C181, C184, C195, and C198. 4 CXXCXGXG motif repeats span residues C143–G150, C159–G166, C181–G188, and C195–T202.

Belongs to the DnaJ family. Homodimer. The cofactor is Zn(2+).

Its subcellular location is the cytoplasm. Functionally, participates actively in the response to hyperosmotic and heat shock by preventing the aggregation of stress-denatured proteins and by disaggregating proteins, also in an autonomous, DnaK-independent fashion. Unfolded proteins bind initially to DnaJ; upon interaction with the DnaJ-bound protein, DnaK hydrolyzes its bound ATP, resulting in the formation of a stable complex. GrpE releases ADP from DnaK; ATP binding to DnaK triggers the release of the substrate protein, thus completing the reaction cycle. Several rounds of ATP-dependent interactions between DnaJ, DnaK and GrpE are required for fully efficient folding. Also involved, together with DnaK and GrpE, in the DNA replication of plasmids through activation of initiation proteins. The protein is Chaperone protein DnaJ of Helicobacter pylori (strain J99 / ATCC 700824) (Campylobacter pylori J99).